A 266-amino-acid polypeptide reads, in one-letter code: Phosphate import ATP-binding protein PstB 1 (266 aa).

Residues 18 to 261 (AQTSNLSFYY…PTNQLTEQYV (244 aa)) form the ABC transporter domain. 50-57 (GPSGCGKT) is an ATP binding site.

It belongs to the ABC transporter superfamily. Phosphate importer (TC 3.A.1.7) family. As to quaternary structure, the complex is composed of two ATP-binding proteins (PstB), two transmembrane proteins (PstC and PstA) and a solute-binding protein (PstS).

The protein resides in the cell inner membrane. The catalysed reaction is phosphate(out) + ATP + H2O = ADP + 2 phosphate(in) + H(+). Functionally, part of the ABC transporter complex PstSACB involved in phosphate import. Responsible for energy coupling to the transport system. In Gloeobacter violaceus (strain ATCC 29082 / PCC 7421), this protein is Phosphate import ATP-binding protein PstB 1.